Here is a 261-residue protein sequence, read N- to C-terminus: 2,3-dihydro-2,3-dihydroxybenzoate dehydrogenase (261 aa).

12 to 36 (FITGAAQGIGEAVARTLASQGAHIA) lines the NAD(+) pocket. Ser-144 provides a ligand contact to substrate. Catalysis depends on Tyr-157, which acts as the Proton acceptor.

Belongs to the short-chain dehydrogenases/reductases (SDR) family.

It localises to the cytoplasm. It carries out the reaction (2S,3S)-2,3-dihydroxy-2,3-dihydrobenzoate + NAD(+) = 2,3-dihydroxybenzoate + NADH + H(+). It participates in siderophore biosynthesis; bacillibactin biosynthesis. The protein is 2,3-dihydro-2,3-dihydroxybenzoate dehydrogenase (dhbA) of Bacillus subtilis (strain 168).